The sequence spans 416 residues: MLRRLGVRHFRRTPLLFVGGDGSIFERYTEIDNSNERRINALKGCGMFEDEWIATEKVHGANFGIYSIEGEKMIRYAKRSGIMPPNEHFFGYHILIPELQRYITSIREMLCEKQKKKLHVVLINGELFGGKYDHPSVPKTRKTVMVAGKPRTISAVQTDSFPQYSPDLHFYAFDIKYKETEDGDYTTLVYDEAIELFQRVPGLLYARAVIRGPMSKVAAFDVERFVTTIPPLVGMGNYPLTGNWAEGLVVKHSRLGMAGFDPKGPTVLKFKCTAFQEISTDRAQGPRVDEMRNVRRDSINRAGVQLPDLESIVQDPIQLEASKLLLNHVCENRLKNVLSKIGTEPFEKEEMTPDQLATLLAKDVLKDFLKDTEPSIVNIPVLIRKDLTRYVIFESRRLVCSQWKDILKRQSPDFSE.

The N-terminal 17 residues, 1 to 17 (MLRRLGVRHFRRTPLLF), are a transit peptide targeting the mitochondrion. ATP-binding positions include 29–31 (TEI), 56–62 (EKVHGAN), Arg-79, Glu-126, Phe-173, and 269–271 (KFK). The N6-AMP-lysine intermediate role is filled by Lys-57.

This sequence belongs to the RNA ligase 2 family. In terms of assembly, component of the RNA editing complex, a 1600 kDa complex composed of at least 20 proteins.

The protein localises to the mitochondrion. It carries out the reaction ATP + (ribonucleotide)n-3'-hydroxyl + 5'-phospho-(ribonucleotide)m = (ribonucleotide)n+m + AMP + diphosphate.. In terms of biological role, RNA editing in kinetoplastid mitochondria inserts and deletes uridylates at multiple sites in pre-mRNAs as directed by guide RNAs. The chain is RNA-editing ligase 2, mitochondrial (REL2) from Trypanosoma brucei brucei (strain 927/4 GUTat10.1).